A 323-amino-acid polypeptide reads, in one-letter code: Leukocyte surface antigen CD47 (323 aa).

The signal sequence occupies residues 1–18; it reads MWPLVAALLLGSACCGSA. Q19 bears the Pyrrolidone carboxylic acid mark. One can recognise an Ig-like V-type domain in the interval 19–127; the sequence is QLLFNKTKSV…ELTREGETII (109 aa). Residues 19–141 lie on the Extracellular side of the membrane; it reads QLLFNKTKSV…RVVSWFSPNE (123 aa). N23, N34, N50, and N73 each carry an N-linked (GlcNAc...) asparagine glycan. Intrachain disulfides connect C33–C263 and C41–C114. A Phosphoserine modification is found at S89. N111 carries an N-linked (GlcNAc...) asparagine glycan. A helical membrane pass occupies residues 142-162; sequence NILIVIFPIFAILLFWGQFGI. At 163 to 176 the chain is on the cytoplasmic side; it reads KTLKYRSGGMDEKT. The chain crosses the membrane as a helical span at residues 177–197; it reads IALLVAGLVITVIVIVGAILF. Residues 198–207 lie on the Extracellular side of the membrane; it reads VPGEYSLKNA. N-linked (GlcNAc...) asparagine glycosylation occurs at N206. Residues 208 to 228 traverse the membrane as a helical segment; the sequence is TGLGLIVTSTGILILLHYYVF. Over 229-235 the chain is Cytoplasmic; the sequence is STAIGLT. A helical membrane pass occupies residues 236 to 256; the sequence is SFVIAILVIQVIAYILAVVGL. At 257-268 the chain is on the extracellular side; that stretch reads SLCIAACIPMHG. Residues 269–289 traverse the membrane as a helical segment; it reads PLLISGLSILALAQLLGLVYM. The Cytoplasmic portion of the chain corresponds to 290-323; that stretch reads KFVASNQKTIQPPRKAVEEPLNAFKESKGMMNDE.

As to quaternary structure, monomer. Interacts with THBS1 (via the C-terminal domain). Interacts with SIRPA. Interacts with FAS/CD95; interaction may be enhanced by functional activation. Interacts with SIRPG, UBQLN1 and UBQLN2. May interact with fibrinogen. Interacts with Aedes aegypti neutrophil-stimulating factor 1; the interaction results in inhibition of phagocytosis activity of macrophages. Very broadly distributed on normal adult tissues, as well as ovarian tumors, being especially abundant in some epithelia and the brain. Macrophages.

The protein resides in the cell membrane. Its function is as follows. Adhesive protein that mediates cell-to-cell interactions. Acts as a receptor for thrombospondin THBS1 and as modulator of integrin signaling through the activation of heterotrimeric G proteins. Involved in signal transduction, cardiovascular homeostasis, inflammation, apoptosis, angiogenesis, cellular self-renewal, and immunoregulation. Plays a role in modulating pulmonary endothelin EDN1 signaling. Modulates nitrous oxide (NO) signaling, in response to THBS1, hence playing a role as a pressor agent, supporting blood pressure. Plays an important role in memory formation and synaptic plasticity in the hippocampus. Receptor for SIRPA, binding to which prevents maturation of immature dendritic cells and inhibits cytokine production by mature dendritic cells. Interaction with SIRPG mediates cell-cell adhesion, enhances superantigen-dependent T-cell-mediated proliferation and costimulates T-cell activation. Positively modulates FAS-dependent apoptosis in T-cells, perhaps by enhancing FAS clustering. Plays a role in suppressing angiogenesis and may be involved in metabolic dysregulation during normal aging. In response to THBS1, negatively modulates wound healing. Inhibits stem cell self-renewal, in response to THBS1, probably by regulation of the stem cell transcription factors POU5F1/OCT4, SOX2, MYC/c-Myc and KLF4. May play a role in membrane transport and/or integrin dependent signal transduction. May prevent premature elimination of red blood cells. The sequence is that of Leukocyte surface antigen CD47 (CD47) from Homo sapiens (Human).